Reading from the N-terminus, the 117-residue chain is Large ribosomal subunit protein bL19 (117 aa).

Belongs to the bacterial ribosomal protein bL19 family.

In terms of biological role, this protein is located at the 30S-50S ribosomal subunit interface and may play a role in the structure and function of the aminoacyl-tRNA binding site. This chain is Large ribosomal subunit protein bL19, found in Thioalkalivibrio sulfidiphilus (strain HL-EbGR7).